A 62-amino-acid polypeptide reads, in one-letter code: Large ribosomal subunit protein bL33 (62 aa).

It belongs to the bacterial ribosomal protein bL33 family.

This Parabacteroides distasonis (strain ATCC 8503 / DSM 20701 / CIP 104284 / JCM 5825 / NCTC 11152) protein is Large ribosomal subunit protein bL33.